Consider the following 517-residue polypeptide: NAD(P)H-quinone oxidoreductase subunit 2 (517 aa).

14 helical membrane-spanning segments follow: residues 16-36 (ILPEGIVIITLVGVLVGDLIF), 43-63 (WLPYMAIIGLLASIVALYLAW), 80-100 (LSIVFRAIIALSTAVTILMSI), 110-130 (LAEFIAIMLTATLGGMFLCGA), 133-153 (LVMIFISLEMLSISSYLMTGY), 168-188 (LLIGASSSAIFLYGVSLLYGL), 211-231 (LGLAIALVFVIAGIAFKISAV), 245-265 (PTPVVAFLSVGSKAAGFALAI), 279-299 (WHFVFTALAILSMVLGNVVAL), 307-327 (MLAYSSIGQAGFVMIGLVAGT), 335-355 (VFYLLVYLFMNLGAFACIILF), 379-399 (LALSICLLSLGGIPPLAGFFG), 401-421 (IYLFWAGWQAELYGLVILGLV), and 467-487 (VGIVLTLIATSLAGILSNPLF).

It belongs to the complex I subunit 2 family. NDH-1 can be composed of about 15 different subunits; different subcomplexes with different compositions have been identified which probably have different functions.

The protein resides in the cellular thylakoid membrane. It catalyses the reaction a plastoquinone + NADH + (n+1) H(+)(in) = a plastoquinol + NAD(+) + n H(+)(out). The enzyme catalyses a plastoquinone + NADPH + (n+1) H(+)(in) = a plastoquinol + NADP(+) + n H(+)(out). Functionally, NDH-1 shuttles electrons from an unknown electron donor, via FMN and iron-sulfur (Fe-S) centers, to quinones in the respiratory and/or the photosynthetic chain. The immediate electron acceptor for the enzyme in this species is believed to be plastoquinone. Couples the redox reaction to proton translocation, and thus conserves the redox energy in a proton gradient. Cyanobacterial NDH-1 also plays a role in inorganic carbon-concentration. This chain is NAD(P)H-quinone oxidoreductase subunit 2, found in Rippkaea orientalis (strain PCC 8801 / RF-1) (Cyanothece sp. (strain PCC 8801)).